The chain runs to 953 residues: Protein ENHANCER OF LHP1 1 (953 aa).

7 WD repeats span residues 15–55, 60–99, 102–143, 144–183, 192–232, 236–275, and 277–316; these read GGSA…TLPP, HHQD…FQTN, RFTL…RVLK, GHKG…VSFT, GFNT…KLFA, DHLE…DIDR, and KFEE…SMLS. Disordered stretches follow at residues 347 to 370, 385 to 419, and 851 to 877; these read SESL…RKRL, EELN…GAFK, and ESKV…SATK. Residues 349–359 show a composition bias toward acidic residues; the sequence is SLDDAMGDSDD. A compositionally biased stretch (polar residues) spans 853 to 877; sequence KVQNPPASIQTSENTEAVMKSSATK. Residues 900–907 carry the Nuclear localization signal motif; that stretch reads TKKDKSDD. The disordered stretch occupies residues 919–953; sequence KNPVNNVNKEDKGQEKEVNQGEARRSSNPFLKSTV. Basic and acidic residues predominate over residues 926 to 943; that stretch reads NKEDKGQEKEVNQGEARR. Polar residues predominate over residues 944 to 953; the sequence is SSNPFLKSTV.

Interacts with EZA1/SWN, LHP1, SLD5 and CLF in the nucleus. As to expression, expressed in root meristematic zones, initiating lateral roots, young leaves and the shoot apex.

The protein resides in the nucleus. Functionally, participates in maintaining the H3K27me3 mark at target genes by interacting with LHP1-PRC2 complexes during replication, thus contributing to H3K27me3 inheritance. The protein is Protein ENHANCER OF LHP1 1 of Arabidopsis thaliana (Mouse-ear cress).